Reading from the N-terminus, the 311-residue chain is HPr kinase/phosphorylase (311 aa).

Catalysis depends on residues H138 and K159. ATP is bound at residue G153–S160. Mg(2+) is bound at residue S160. D177 (proton acceptor; for phosphorylation activity. Proton donor; for dephosphorylation activity) is an active-site residue. The interval L201–N210 is important for the catalytic mechanism of both phosphorylation and dephosphorylation. E202 contacts Mg(2+). Residue R243 is part of the active site. Residues P264–R269 are important for the catalytic mechanism of dephosphorylation.

It belongs to the HPrK/P family. As to quaternary structure, homohexamer. Mg(2+) is required as a cofactor.

It catalyses the reaction [HPr protein]-L-serine + ATP = [HPr protein]-O-phospho-L-serine + ADP + H(+). The catalysed reaction is [HPr protein]-O-phospho-L-serine + phosphate + H(+) = [HPr protein]-L-serine + diphosphate. In terms of biological role, catalyzes the ATP- as well as the pyrophosphate-dependent phosphorylation of a specific serine residue in HPr, a phosphocarrier protein of the phosphoenolpyruvate-dependent sugar phosphotransferase system (PTS). HprK/P also catalyzes the pyrophosphate-producing, inorganic phosphate-dependent dephosphorylation (phosphorolysis) of seryl-phosphorylated HPr (P-Ser-HPr). The two antagonistic activities of HprK/P are regulated by several intracellular metabolites, which change their concentration in response to the absence or presence of rapidly metabolisable carbon sources (glucose, fructose, etc.) in the growth medium. Also phosphorylates/dephosphorylates the HPr-like catabolite repression protein crh on a specific serine residue. Therefore, by controlling the phosphorylation state of HPr and crh, HPrK/P is a sensor enzyme that plays a major role in the regulation of carbon metabolism and sugar transport: it mediates carbon catabolite repression (CCR), and regulates PTS-catalyzed carbohydrate uptake and inducer exclusion. The protein is HPr kinase/phosphorylase of Geobacillus sp. (strain WCH70).